Here is a 302-residue protein sequence, read N- to C-terminus: Acetylglutamate kinase (302 aa).

Residues 68 to 69, Arg90, and Asn194 contribute to the substrate site; that span reads GG.

Belongs to the acetylglutamate kinase family. ArgB subfamily.

The protein resides in the cytoplasm. It carries out the reaction N-acetyl-L-glutamate + ATP = N-acetyl-L-glutamyl 5-phosphate + ADP. It functions in the pathway amino-acid biosynthesis; L-arginine biosynthesis; N(2)-acetyl-L-ornithine from L-glutamate: step 2/4. Its function is as follows. Catalyzes the ATP-dependent phosphorylation of N-acetyl-L-glutamate. This chain is Acetylglutamate kinase, found in Acinetobacter baumannii (strain AB307-0294).